Here is a 163-residue protein sequence, read N- to C-terminus: Crossover junction endodeoxyribonuclease RuvC (163 aa).

Residues D4, E65, and D138 contribute to the active site. Mg(2+) is bound by residues D4, E65, and D138.

Belongs to the RuvC family. As to quaternary structure, homodimer which binds Holliday junction (HJ) DNA. The HJ becomes 2-fold symmetrical on binding to RuvC with unstacked arms; it has a different conformation from HJ DNA in complex with RuvA. In the full resolvosome a probable DNA-RuvA(4)-RuvB(12)-RuvC(2) complex forms which resolves the HJ. Requires Mg(2+) as cofactor.

The protein localises to the cytoplasm. It carries out the reaction Endonucleolytic cleavage at a junction such as a reciprocal single-stranded crossover between two homologous DNA duplexes (Holliday junction).. The RuvA-RuvB-RuvC complex processes Holliday junction (HJ) DNA during genetic recombination and DNA repair. Endonuclease that resolves HJ intermediates. Cleaves cruciform DNA by making single-stranded nicks across the HJ at symmetrical positions within the homologous arms, yielding a 5'-phosphate and a 3'-hydroxyl group; requires a central core of homology in the junction. The consensus cleavage sequence is 5'-(A/T)TT(C/G)-3'. Cleavage occurs on the 3'-side of the TT dinucleotide at the point of strand exchange. HJ branch migration catalyzed by RuvA-RuvB allows RuvC to scan DNA until it finds its consensus sequence, where it cleaves and resolves the cruciform DNA. The sequence is that of Crossover junction endodeoxyribonuclease RuvC from Corynebacterium jeikeium (strain K411).